The primary structure comprises 488 residues: MWESKFAKESLTFDDVLLIPAQSDILPKDVDLSVQLSDKVKLNIPVISAGMDTVTESKMAIAMARQGGLGVIHKNMGVEEQADEVQKVKRSENGVISNPFFLTPEESVYEAEALMGKYRISGVPIVDNKEDRNLVGILTNRDLRFIEDFSIKIVDVMTQENLITAPVNTTLEEAEKILQKHKIEKLPLVKDGRLEGLITIKDIEKVIEFPNAAKDEHGRLLVAAAIGISKDTDIRAQKLVEAGVDVLVIDTAHGHSKGVIDQVKHIKKTYPEITLVAGNVATAEATKDLFEAGADIVKVGIGPGSICTTRVVAGVGVPQITAIYDCATEARKHGKAIIADGGIKFSGDIIKALAAGGHAVMLGSLLAGTEESPGATEIFQGRQYKVYRGMGSLGAMEKGSNDRYFQEDKAPKKFVPEGIEGRTAYKGALQDTIYQLMGGVRAGMGYTGSHDLRELREEAQFTRMGPAGLAESHPHNIQITKESPNYSF.

CBS domains lie at 95 to 153 and 157 to 216; these read VISN…SIKI and MTQE…AKDE. Residues aspartate 250 and 300–302 contribute to the NAD(+) site; that span reads GIG. K(+)-binding residues include glycine 302 and glycine 304. Serine 305 provides a ligand contact to IMP. Cysteine 307 serves as a coordination point for K(+). The active-site Thioimidate intermediate is cysteine 307. IMP is bound by residues 340–342, 363–364, and 387–391; these read DGG, GS, and YRGMG. The Proton acceptor role is filled by arginine 403. Glutamate 417 contributes to the IMP binding site. The interval 468 to 488 is disordered; that stretch reads GLAESHPHNIQITKESPNYSF. Residues glutamate 471, serine 472, and histidine 473 each contribute to the K(+) site. A compositionally biased stretch (polar residues) spans 475-488; that stretch reads HNIQITKESPNYSF.

This sequence belongs to the IMPDH/GMPR family. In terms of assembly, homotetramer. It depends on K(+) as a cofactor.

It carries out the reaction IMP + NAD(+) + H2O = XMP + NADH + H(+). It participates in purine metabolism; XMP biosynthesis via de novo pathway; XMP from IMP: step 1/1. With respect to regulation, mycophenolic acid (MPA) is a non-competitive inhibitor that prevents formation of the closed enzyme conformation by binding to the same site as the amobile flap. In contrast, mizoribine monophosphate (MZP) is a competitive inhibitor that induces the closed conformation. MPA is a potent inhibitor of mammalian IMPDHs but a poor inhibitor of the bacterial enzymes. MZP is a more potent inhibitor of bacterial IMPDH. Catalyzes the conversion of inosine 5'-phosphate (IMP) to xanthosine 5'-phosphate (XMP), the first committed and rate-limiting step in the de novo synthesis of guanine nucleotides, and therefore plays an important role in the regulation of cell growth. The polypeptide is Inosine-5'-monophosphate dehydrogenase (Staphylococcus aureus (strain Mu50 / ATCC 700699)).